We begin with the raw amino-acid sequence, 66 residues long: Large ribosomal subunit protein bL32 (66 aa).

This sequence belongs to the bacterial ribosomal protein bL32 family.

In Leptospira interrogans serogroup Icterohaemorrhagiae serovar copenhageni (strain Fiocruz L1-130), this protein is Large ribosomal subunit protein bL32.